We begin with the raw amino-acid sequence, 439 residues long: Ribosomal protein uS12 methylthiotransferase RimO (439 aa).

An MTTase N-terminal domain is found at Lys3 to Gly115. [4Fe-4S] cluster is bound by residues Cys12, Cys46, Cys78, Cys147, Cys151, and Cys154. In terms of domain architecture, Radical SAM core spans Thr133 to Ala362.

This sequence belongs to the methylthiotransferase family. RimO subfamily. [4Fe-4S] cluster serves as cofactor.

It is found in the cytoplasm. The enzyme catalyses L-aspartate(89)-[ribosomal protein uS12]-hydrogen + (sulfur carrier)-SH + AH2 + 2 S-adenosyl-L-methionine = 3-methylsulfanyl-L-aspartate(89)-[ribosomal protein uS12]-hydrogen + (sulfur carrier)-H + 5'-deoxyadenosine + L-methionine + A + S-adenosyl-L-homocysteine + 2 H(+). Functionally, catalyzes the methylthiolation of an aspartic acid residue of ribosomal protein uS12. The chain is Ribosomal protein uS12 methylthiotransferase RimO from Wolinella succinogenes (strain ATCC 29543 / DSM 1740 / CCUG 13145 / JCM 31913 / LMG 7466 / NCTC 11488 / FDC 602W) (Vibrio succinogenes).